Consider the following 204-residue polypeptide: Large ribosomal subunit protein eL15 (204 aa).

The segment at 161–180 is disordered; sequence MRGLTSAGKKSRGLGKGHKF. Over residues 169–180 the composition is skewed to basic residues; it reads KKSRGLGKGHKF.

It belongs to the eukaryotic ribosomal protein eL15 family. Component of the large ribosomal subunit.

The protein localises to the cytoplasm. Its function is as follows. Component of the large ribosomal subunit. The ribosome is a large ribonucleoprotein complex responsible for the synthesis of proteins in the cell. The chain is Large ribosomal subunit protein eL15 (rpl15) from Ictalurus punctatus (Channel catfish).